The chain runs to 107 residues: CRISPR-associated endoribonuclease Cas2 (107 aa).

Asp6 lines the Mg(2+) pocket.

The protein belongs to the CRISPR-associated endoribonuclease Cas2 protein family. In terms of assembly, homodimer, forms a heterotetramer with a Cas1 homodimer. Mg(2+) is required as a cofactor.

Functionally, CRISPR (clustered regularly interspaced short palindromic repeat), is an adaptive immune system that provides protection against mobile genetic elements (viruses, transposable elements and conjugative plasmids). CRISPR clusters contain sequences complementary to antecedent mobile elements and target invading nucleic acids. CRISPR clusters are transcribed and processed into CRISPR RNA (crRNA). Functions as a ssRNA-specific endoribonuclease. Involved in the integration of spacer DNA into the CRISPR cassette. The protein is CRISPR-associated endoribonuclease Cas2 of Streptococcus mutans serotype c (strain NN2025).